Here is a 953-residue protein sequence, read N- to C-terminus: Catenin alpha-2 (953 aa).

A Phosphothreonine modification is found at Thr-632. Phosphoserine is present on residues Ser-640, Ser-651, and Ser-901. Residues 912 to 927 (EKKPLVKREKPEEFQT) are compositionally biased toward basic and acidic residues. A disordered region spans residues 912–939 (EKKPLVKREKPEEFQTRVRRGSQKKHIS). Residues 928 to 938 (RVRRGSQKKHI) are compositionally biased toward basic residues. Ser-939 carries the post-translational modification Phosphoserine.

It belongs to the vinculin/alpha-catenin family. Interacts with CDH1 and CDH2. Interacts with ZNF639; recruits CTNNA2 to the nucleus. Interacts with F-actin. In terms of tissue distribution, expressed in neural tissues, with strongest expression in fetal and adult brain. Expressed in the developing cortical plate and marginal zone of 20-week-old human fetal brain.

Its subcellular location is the cell membrane. It is found in the cytoplasm. The protein localises to the cytoskeleton. It localises to the cell junction. The protein resides in the adherens junction. Its subcellular location is the cell projection. It is found in the axon. The protein localises to the nucleus. Functionally, may function as a linker between cadherin adhesion receptors and the cytoskeleton to regulate cell-cell adhesion and differentiation in the nervous system. Required for proper regulation of cortical neuronal migration and neurite growth. It acts as a negative regulator of Arp2/3 complex activity and Arp2/3-mediated actin polymerization. It thereby suppresses excessive actin branching which would impair neurite growth and stability. Regulates morphological plasticity of synapses and cerebellar and hippocampal lamination during development. Functions in the control of startle modulation. In Homo sapiens (Human), this protein is Catenin alpha-2 (CTNNA2).